The chain runs to 208 residues: Ribosomal RNA small subunit methyltransferase G (208 aa).

Residues Gly76, Leu81, 127–128 (VE), and Arg142 each bind S-adenosyl-L-methionine.

It belongs to the methyltransferase superfamily. RNA methyltransferase RsmG family.

The protein localises to the cytoplasm. The catalysed reaction is guanosine(527) in 16S rRNA + S-adenosyl-L-methionine = N(7)-methylguanosine(527) in 16S rRNA + S-adenosyl-L-homocysteine. In terms of biological role, specifically methylates the N7 position of guanine in position 527 of 16S rRNA. In Legionella pneumophila (strain Corby), this protein is Ribosomal RNA small subunit methyltransferase G.